We begin with the raw amino-acid sequence, 1004 residues long: Cadmium/zinc-transporting ATPase HMA3 (1004 aa).

Positions 42 to 108 constitute an HMA domain; the sequence is KKTYLDVLGV…ALNKAGLEAS (67 aa). A run of 8 helical transmembrane segments spans residues 120 to 140, 144 to 164, 171 to 191, 193 to 213, 340 to 360, 371 to 391, 683 to 703, and 707 to 727; these read RWPS…FFEW, PLQC…VRRG, LSLD…CLGD, TEAG…TLAC, CAKY…LIPA, WKLA…LSTP, IAVN…LAAA, and VLWA…LNSM. The tract at residues 931 to 952 is disordered; it reads TGCGASKRSPPAEGSCSGGEGG.

The protein belongs to the cation transport ATPase (P-type) (TC 3.A.3) family. Type IB subfamily. As to expression, specifically expressed in roots.

It localises to the vacuole membrane. It carries out the reaction Zn(2+)(in) + ATP + H2O = Zn(2+)(out) + ADP + phosphate + H(+). It catalyses the reaction Cd(2+)(in) + ATP + H2O = Cd(2+)(out) + ADP + phosphate + H(+). Functionally, root-specific cadmium (Cd) transporter that mediates Cd efflux in root vacuoles. Involved in Cd detoxification by sequestrating Cd into root vacuoles and limiting translocation of Cd from the roots to the shoots, and accumulation in grains. In Oryza sativa subsp. japonica (Rice), this protein is Cadmium/zinc-transporting ATPase HMA3.